The sequence spans 112 residues: Putative pterin-4-alpha-carbinolamine dehydratase (112 aa).

Belongs to the pterin-4-alpha-carbinolamine dehydratase family.

It carries out the reaction (4aS,6R)-4a-hydroxy-L-erythro-5,6,7,8-tetrahydrobiopterin = (6R)-L-erythro-6,7-dihydrobiopterin + H2O. The protein is Putative pterin-4-alpha-carbinolamine dehydratase of Shewanella sp. (strain MR-4).